The primary structure comprises 337 residues: DNA-directed RNA polymerase subunit alpha (337 aa).

An alpha N-terminal domain (alpha-NTD) region spans residues 1-233 (MIQKNWQELI…DQLSLFVNFE (233 aa)). Residues 249–337 (FNPALLKKVD…DLAKRYEDQY (89 aa)) form an alpha C-terminal domain (alpha-CTD) region.

It belongs to the RNA polymerase alpha chain family. As to quaternary structure, homodimer. The RNAP catalytic core consists of 2 alpha, 1 beta, 1 beta' and 1 omega subunit. When a sigma factor is associated with the core the holoenzyme is formed, which can initiate transcription.

The enzyme catalyses RNA(n) + a ribonucleoside 5'-triphosphate = RNA(n+1) + diphosphate. DNA-dependent RNA polymerase catalyzes the transcription of DNA into RNA using the four ribonucleoside triphosphates as substrates. The sequence is that of DNA-directed RNA polymerase subunit alpha from Bartonella quintana (strain Toulouse) (Rochalimaea quintana).